The primary structure comprises 773 residues: Tyrosine kinase receptor Cad96Ca (773 aa).

Positions 1-48 are cleaved as a signal peptide; it reads MVYHHHNHESRIIHCRKQLTSWRRRSLLLTIIVVTATVVSLISQEAEA. Residues 49 to 315 lie on the Extracellular side of the membrane; the sequence is HNQNAPPILY…ITIFSLKSGT (267 aa). The 115-residue stretch at 58 to 172 folds into the Cadherin domain; it reads YVRERNWRIS…ENSSGYRPQT (115 aa). N-linked (GlcNAc...) asparagine glycans are attached at residues N126, N164, and N180. A disordered region spans residues 196–302; it reads SIRNGLPNSR…TPSGGHHNNS (107 aa). A compositionally biased stretch (pro residues) spans 209-235; it reads WYPPVPQNNIFGPPPFGNNYPPPPPNI. The segment covering 243 to 253 has biased composition (acidic residues); it reads SGEEEQPDEEV. Polar residues-rich tracts occupy residues 254 to 283 and 290 to 302; these read TPTT…STRV and ETTT…HNNS. N-linked (GlcNAc...) asparagine glycans are attached at residues N278, N279, N300, and N301. A helical membrane pass occupies residues 316-336; that stretch reads IPIVVTVGGFFVAIAVLLAYL. Residues 337-773 lie on the Cytoplasmic side of the membrane; sequence CRRRLCAISR…NIVSLSGEKL (437 aa). Disordered stretches follow at residues 352 to 373 and 411 to 447; these read KEKE…LTDD and TGVT…AGSS. A compositionally biased stretch (polar residues) spans 361-373; it reads SNQSQLSSTLTDD. The segment covering 411-433 has biased composition (low complexity); the sequence is TGVTNGGVSSPGVPSPGTGEPGS. In terms of domain architecture, Protein kinase spans 470–749; that stretch reads LKFFNILGEG…MLDKLLHTEM (280 aa). Residues 476–484 and K504 each bind ATP; that span reads LGEGAFGQV. The active-site Proton acceptor is the D610.

It belongs to the protein kinase superfamily. Tyr protein kinase family. Fibroblast growth factor receptor subfamily.

Its subcellular location is the membrane. The catalysed reaction is L-tyrosyl-[protein] + ATP = O-phospho-L-tyrosyl-[protein] + ADP + H(+). This is Tyrosine kinase receptor Cad96Ca (Cad96Ca) from Drosophila melanogaster (Fruit fly).